Consider the following 906-residue polypeptide: Protein translocase subunit SecA (906 aa).

ATP contacts are provided by residues Q89, 107–111, and D502; that span reads GEGKT. Zn(2+)-binding residues include C890, C892, C901, and H902.

It belongs to the SecA family. As to quaternary structure, monomer and homodimer. Part of the essential Sec protein translocation apparatus which comprises SecA, SecYEG and auxiliary proteins SecDF-YajC and YidC. Requires Zn(2+) as cofactor.

Its subcellular location is the cell inner membrane. The protein localises to the cytoplasm. It catalyses the reaction ATP + H2O + cellular proteinSide 1 = ADP + phosphate + cellular proteinSide 2.. Functionally, part of the Sec protein translocase complex. Interacts with the SecYEG preprotein conducting channel. Has a central role in coupling the hydrolysis of ATP to the transfer of proteins into and across the cell membrane, serving both as a receptor for the preprotein-SecB complex and as an ATP-driven molecular motor driving the stepwise translocation of polypeptide chains across the membrane. The polypeptide is Protein translocase subunit SecA (Brucella canis (strain ATCC 23365 / NCTC 10854 / RM-666)).